Consider the following 366-residue polypeptide: MAISDNGGGSVGLCYGSEFSISDHWDKLTRPSSIKVVGDGDLSRSAELIVEPLESGFALTLGNALRRVMMSSLRGFAVYGIEVEGVSHELTSLSGVREDVADLVLNLSMLRVKLLTSESRVLRLVAKGPGEITAAAIGDSEGCVVLNKDLHICTLGKDVDFSMKIYVNSGKGYVPASEYRAASRSGATSEVGPGFIATNALYSPVKKVAFRIESSRIGQFTDYDRLVISVETDGSISPDEAVAVSARVLQDQLQSFIGSEEVEGESRKKVDKEEGALPYDHNLLRKVDELELSVRSHNCLKNDNITYIGDLVQKTESDMLRTPNFGRKSLNEINEVLASMNLHLGMKVPNWPPESIENLSKQYSED.

The interval 1–260 (MAISDNGGGS…DQLQSFIGSE (260 aa)) is alpha N-terminal domain (alpha-NTD). An alpha C-terminal domain (alpha-CTD) region spans residues 274 to 366 (EGALPYDHNL…ENLSKQYSED (93 aa)).

This sequence belongs to the RNA polymerase alpha chain family. As to quaternary structure, homodimer. The RNAP catalytic core consists of 2 alpha, 1 beta, 1 beta' and 1 omega subunit. When a sigma factor is associated with the core the holoenzyme is formed, which can initiate transcription.

The enzyme catalyses RNA(n) + a ribonucleoside 5'-triphosphate = RNA(n+1) + diphosphate. Functionally, DNA-dependent RNA polymerase catalyzes the transcription of DNA into RNA using the four ribonucleoside triphosphates as substrates. The polypeptide is DNA-directed RNA polymerase subunit alpha (Anaplasma marginale (strain St. Maries)).